Here is a 212-residue protein sequence, read N- to C-terminus: Uracil phosphoribosyltransferase (212 aa).

5-phospho-alpha-D-ribose 1-diphosphate contacts are provided by residues Arg-78, Arg-103, and 130–138; that span reads DPMLATGGS. Uracil is bound by residues Ile-193 and 198-200; that span reads GDA. Asp-199 contributes to the 5-phospho-alpha-D-ribose 1-diphosphate binding site.

It belongs to the UPRTase family. Mg(2+) serves as cofactor.

It carries out the reaction UMP + diphosphate = 5-phospho-alpha-D-ribose 1-diphosphate + uracil. It functions in the pathway pyrimidine metabolism; UMP biosynthesis via salvage pathway; UMP from uracil: step 1/1. Allosterically activated by GTP. Functionally, catalyzes the conversion of uracil and 5-phospho-alpha-D-ribose 1-diphosphate (PRPP) to UMP and diphosphate. This chain is Uracil phosphoribosyltransferase, found in Bordetella petrii (strain ATCC BAA-461 / DSM 12804 / CCUG 43448).